A 445-amino-acid polypeptide reads, in one-letter code: Argininosuccinate synthase (445 aa).

ATP-binding positions include 17-25 (AFSGGLDTS) and Ala-43. Tyr-99 contacts L-citrulline. Gly-129 and Thr-131 together coordinate ATP. The L-aspartate site is built by Thr-131, Asn-135, and Asp-136. Asn-135 lines the L-citrulline pocket. An ATP-binding site is contributed by Asp-136. The L-citrulline site is built by Arg-139 and Ser-192. ATP is bound at residue Asp-194. 3 residues coordinate L-citrulline: Thr-201, Glu-203, and Glu-280.

This sequence belongs to the argininosuccinate synthase family. Type 2 subfamily. Homotetramer.

The protein resides in the cytoplasm. It catalyses the reaction L-citrulline + L-aspartate + ATP = 2-(N(omega)-L-arginino)succinate + AMP + diphosphate + H(+). It participates in amino-acid biosynthesis; L-arginine biosynthesis; L-arginine from L-ornithine and carbamoyl phosphate: step 2/3. This Rhodopseudomonas palustris (strain BisA53) protein is Argininosuccinate synthase.